The following is a 352-amino-acid chain: UDP-3-O-acylglucosamine N-acyltransferase (352 aa).

His-242 acts as the Proton acceptor in catalysis.

It belongs to the transferase hexapeptide repeat family. LpxD subfamily. In terms of assembly, homotrimer.

The enzyme catalyses a UDP-3-O-[(3R)-3-hydroxyacyl]-alpha-D-glucosamine + a (3R)-hydroxyacyl-[ACP] = a UDP-2-N,3-O-bis[(3R)-3-hydroxyacyl]-alpha-D-glucosamine + holo-[ACP] + H(+). Its pathway is bacterial outer membrane biogenesis; LPS lipid A biosynthesis. Functionally, catalyzes the N-acylation of UDP-3-O-acylglucosamine using 3-hydroxyacyl-ACP as the acyl donor. Is involved in the biosynthesis of lipid A, a phosphorylated glycolipid that anchors the lipopolysaccharide to the outer membrane of the cell. The sequence is that of UDP-3-O-acylglucosamine N-acyltransferase from Alkalilimnicola ehrlichii (strain ATCC BAA-1101 / DSM 17681 / MLHE-1).